A 507-amino-acid chain; its full sequence is Putative F-box/LRR-repeat protein At4g00320 (507 aa).

The F-box domain occupies 12–60 (RDGISGLPDAMICHILSFLPTKVAASTTVLAKRWKPLLAFMPNLDFDES). LRR repeat units follow at residues 135-163 (RGFGSNSTFYPLPSEIFVSKTLVRLKIQF), 187-212 (YVKMDTRMLQKLLSGCHTLEELLLMN), 214-240 (IWKESSEPEPCFVSVSVRTLKILKFSR), 317-348 (ILYLTEDTLKVLGCCRETMPVFENLIHLTIRT), and 349-374 (GVHIGWKSLPHLLKNCPNLQTLVFEG).

This Arabidopsis thaliana (Mouse-ear cress) protein is Putative F-box/LRR-repeat protein At4g00320.